The sequence spans 100 residues: Bombyxin A-2 homolog (100 aa).

The signal sequence occupies residues 1 to 18; that stretch reads MRTQVLFLIVVLAVMASG. Disulfide bonds link Cys-26–Cys-85, Cys-38–Cys-98, and Cys-84–Cys-89. Residues 47 to 75 constitute a propeptide, c peptide like; the sequence is PPYISSENEGYGWKWLERQRARQLDEARG.

Belongs to the insulin family. Heterodimer of a B chain and an A chain linked by two disulfide bonds.

Its subcellular location is the secreted. In terms of biological role, brain peptide responsible for activation of prothoracic glands to produce ecdysone in insects. The sequence is that of Bombyxin A-2 homolog (SBXA2) from Samia cynthia (Ailanthus silkmoth).